The sequence spans 98 residues: Parvalbumin beta 1 (98 aa).

An N-acetylserine modification is found at Ser-1. 2 EF-hand domains span residues 32–67 (KIGL…FSAG) and 67–98 (GARA…MIKG). Asp-45, Asp-47, Ser-49, Phe-51, Glu-53, Glu-56, Asp-80, Asp-82, Asp-84, Lys-86, and Glu-91 together coordinate Ca(2+).

This sequence belongs to the parvalbumin family.

In terms of biological role, in muscle, parvalbumin is thought to be involved in relaxation after contraction. It binds two calcium ions. The protein is Parvalbumin beta 1 of Macruronus magellanicus (Patagonian grenadier).